Reading from the N-terminus, the 340-residue chain is Glycerol-3-phosphate dehydrogenase [NAD(P)+] (340 aa).

4 residues coordinate NADPH: S14, F15, R35, and K108. The sn-glycerol 3-phosphate site is built by K108 and G136. A140 lines the NADPH pocket. Sn-glycerol 3-phosphate is bound by residues K191, D244, S254, R255, and N256. Residue K191 is the Proton acceptor of the active site. R255 contacts NADPH. Residue E281 coordinates NADPH.

It belongs to the NAD-dependent glycerol-3-phosphate dehydrogenase family.

It localises to the cytoplasm. The catalysed reaction is sn-glycerol 3-phosphate + NAD(+) = dihydroxyacetone phosphate + NADH + H(+). It carries out the reaction sn-glycerol 3-phosphate + NADP(+) = dihydroxyacetone phosphate + NADPH + H(+). It participates in membrane lipid metabolism; glycerophospholipid metabolism. Functionally, catalyzes the reduction of the glycolytic intermediate dihydroxyacetone phosphate (DHAP) to sn-glycerol 3-phosphate (G3P), the key precursor for phospholipid synthesis. This is Glycerol-3-phosphate dehydrogenase [NAD(P)+] from Pseudomonas aeruginosa (strain ATCC 15692 / DSM 22644 / CIP 104116 / JCM 14847 / LMG 12228 / 1C / PRS 101 / PAO1).